A 109-amino-acid chain; its full sequence is Large ribosomal subunit protein eL30 (109 aa).

This sequence belongs to the eukaryotic ribosomal protein eL30 family.

In Yarrowia lipolytica (strain CLIB 122 / E 150) (Yeast), this protein is Large ribosomal subunit protein eL30 (RPL30).